Here is a 225-residue protein sequence, read N- to C-terminus: Insulin-induced gene 2 protein (225 aa).

At 1–28 (MAEGETESPGPKKCGPYISSVTSQSVNL) the chain is on the cytoplasmic side. A helical transmembrane segment spans residues 29–51 (MIRGVVLFFIGVFLALVLNLLQI). Residues 52 to 70 (QRNVTLFPPDVIASIFSSA) lie on the Lumenal side of the membrane. The helical transmembrane segment at 71–88 (WWVPPCCGTASAVIGLLY) threads the bilayer. At 89–103 (PCIDRHLGEPHKFKR) the chain is on the cytoplasmic side. A helical membrane pass occupies residues 104–126 (EWSSVMRCVAVFVGINHASAKVD). The Lumenal portion of the chain corresponds to 127–129 (FDN). A helical membrane pass occupies residues 130-148 (NIQLSLTLAALSIGLWWTF). The Cytoplasmic segment spans residues 149 to 153 (DRSRS). A Phosphoserine; by PCK1 modification is found at Ser151. Residues 154–175 (GFGLGVGIAFLATVVTQLLVYN) traverse the membrane as a helical segment. Residues 176 to 189 (GVYQYTSPDFLYVR) are Lumenal-facing. A helical transmembrane segment spans residues 190 to 207 (SWLPCIFFAGGITMGNIG). Residues 208–225 (RQLAMYECKVIAEKSHQE) are Cytoplasmic-facing. Cys215 is modified (cysteine sulfenic acid (-SOH); alternate). A Glycyl cysteine thioester (Cys-Gly) (interchain with G-Cter in ubiquitin); alternate cross-link involves residue Cys215. Residues 219–225 (AEKSHQE) carry the KxHxx motif.

This sequence belongs to the INSIG family. As to quaternary structure, interacts with SCAP; interaction is direct and only takes place in the presence of sterols; it prevents interaction between SCAP and the coat protein complex II (COPII). Associates with the SCAP-SREBP complex (composed of SCAP and SREBF1/SREBP1 or SREBF2/SREBP2); association is mediated via its interaction with SCAP and only takes place in the presence of sterols. Interacts with RNF139. Interacts with RNF145. Phosphorylation at Ser-151 by PCK1 reduces binding to oxysterol, disrupting the interaction between INSIG2 and SCAP, thereby promoting nuclear translocation of SREBP proteins (SREBF1/SREBP1 or SREBF2/SREBP2) and subsequent transcription of downstream lipogenesis-related genes. In terms of processing, polyubiquitinated by AMFR/gp78 at Cys-215 in some tissues such as adipose tissues, undifferentiated myoblasts and liver, leading to its degradation. In differentiated myotubes, Cys-215 oxidation prevents ubiquitination at the same site, resulting in protein stabilization. Post-translationally, oxidized at Cys-215 in differentiated myotubes, preventing ubiquitination at the same site, and resulting in protein stabilization.

Its subcellular location is the endoplasmic reticulum membrane. In terms of biological role, oxysterol-binding protein that mediates feedback control of cholesterol synthesis by controlling both endoplasmic reticulum to Golgi transport of SCAP and degradation of HMGCR. Acts as a negative regulator of cholesterol biosynthesis by mediating the retention of the SCAP-SREBP complex in the endoplasmic reticulum, thereby blocking the processing of sterol regulatory element-binding proteins (SREBPs) SREBF1/SREBP1 and SREBF2/SREBP2. Binds oxysterol, including 22-hydroxycholesterol, 24-hydroxycholesterol, 25-hydroxycholesterol and 27-hydroxycholesterol, regulating interaction with SCAP and retention of the SCAP-SREBP complex in the endoplasmic reticulum. In presence of oxysterol, interacts with SCAP, retaining the SCAP-SREBP complex in the endoplasmic reticulum, thereby preventing SCAP from escorting SREBF1/SREBP1 and SREBF2/SREBP2 to the Golgi. Sterol deprivation or phosphorylation by PCK1 reduce oxysterol-binding, disrupting the interaction between INSIG2 and SCAP, thereby promoting Golgi transport of the SCAP-SREBP complex, followed by processing and nuclear translocation of SREBF1/SREBP1 and SREBF2/SREBP2. Also regulates cholesterol synthesis by regulating degradation of HMGCR: initiates the sterol-mediated ubiquitin-mediated endoplasmic reticulum-associated degradation (ERAD) of HMGCR via recruitment of the reductase to the ubiquitin ligase RNF139. The sequence is that of Insulin-induced gene 2 protein from Homo sapiens (Human).